The sequence spans 198 residues: Recombination protein RecR (198 aa).

The C4-type zinc-finger motif lies at Cys-57–Cys-72. The 96-residue stretch at Thr-80 to Pro-175 folds into the Toprim domain.

Belongs to the RecR family.

Its function is as follows. May play a role in DNA repair. It seems to be involved in an RecBC-independent recombinational process of DNA repair. It may act with RecF and RecO. In Geobacillus sp. (strain WCH70), this protein is Recombination protein RecR.